Reading from the N-terminus, the 352-residue chain is Glycerol-1-phosphate dehydrogenase [NAD(P)+] (352 aa).

Residues 99–103 and 121–124 contribute to the NAD(+) site; these read GTKID and TSPS. Asp126 provides a ligand contact to substrate. Ser130 serves as a coordination point for NAD(+). A substrate-binding site is contributed by Asp173. Residues Asp173 and His253 each coordinate Zn(2+). His257 contributes to the substrate binding site. Position 269 (His269) interacts with Zn(2+).

It belongs to the glycerol-1-phosphate dehydrogenase family. The cofactor is Zn(2+).

The protein resides in the cytoplasm. It catalyses the reaction sn-glycerol 1-phosphate + NAD(+) = dihydroxyacetone phosphate + NADH + H(+). It carries out the reaction sn-glycerol 1-phosphate + NADP(+) = dihydroxyacetone phosphate + NADPH + H(+). It functions in the pathway membrane lipid metabolism; glycerophospholipid metabolism. In terms of biological role, catalyzes the NAD(P)H-dependent reduction of dihydroxyacetonephosphate (DHAP or glycerone phosphate) to glycerol 1-phosphate (G1P). The G1P thus generated is used as the glycerophosphate backbone of phospholipids in the cellular membranes of Archaea. This is Glycerol-1-phosphate dehydrogenase [NAD(P)+] from Thermoplasma volcanium (strain ATCC 51530 / DSM 4299 / JCM 9571 / NBRC 15438 / GSS1).